The primary structure comprises 432 residues: Pachytene checkpoint protein 2 homolog (432 aa).

179-186 (GPPGTGKT) lines the ATP pocket.

This sequence belongs to the AAA ATPase family. PCH2 subfamily.

Its function is as follows. Plays a key role in chromosome recombination and chromosome structure development during meiosis. Required at early steps in meiotic recombination that leads to non-crossovers pathways. Also needed for efficient completion of homologous synapsis by influencing crossover distribution along the chromosomes affecting both crossovers and non-crossovers pathways. The protein is Pachytene checkpoint protein 2 homolog (trip13) of Xenopus tropicalis (Western clawed frog).